The primary structure comprises 226 residues: Ribose-5-phosphate isomerase A (226 aa).

Residues 28 to 31 (TGST), 80 to 83 (DGAD), and 93 to 96 (KGGG) contribute to the substrate site. Glu-102 acts as the Proton acceptor in catalysis. Lys-120 is a substrate binding site.

It belongs to the ribose 5-phosphate isomerase family. Homodimer.

The enzyme catalyses aldehydo-D-ribose 5-phosphate = D-ribulose 5-phosphate. Its pathway is carbohydrate degradation; pentose phosphate pathway; D-ribose 5-phosphate from D-ribulose 5-phosphate (non-oxidative stage): step 1/1. Its function is as follows. Catalyzes the reversible conversion of ribose-5-phosphate to ribulose 5-phosphate. This chain is Ribose-5-phosphate isomerase A, found in Caulobacter sp. (strain K31).